Reading from the N-terminus, the 91-residue chain is Long neurotoxin LNTX28 (91 aa).

An N-terminal signal peptide occupies residues 1–21 (MKTLLLTLVVMTIVCLDLGYT). Disulfide bonds link cysteine 24-cysteine 41, cysteine 34-cysteine 62, cysteine 47-cysteine 51, cysteine 66-cysteine 77, and cysteine 78-cysteine 83.

Belongs to the three-finger toxin family. Long-chain subfamily. Type II alpha-neurotoxin sub-subfamily. As to expression, expressed by the venom gland.

The protein resides in the secreted. Binds with high affinity to muscular (alpha-1/CHRNA1) and neuronal (alpha-7/CHRNA7) nicotinic acetylcholine receptor (nAChR) and inhibits acetylcholine from binding to the receptor, thereby impairing neuromuscular and neuronal transmission. This chain is Long neurotoxin LNTX28, found in Ophiophagus hannah (King cobra).